A 435-amino-acid chain; its full sequence is Phosphomethylpyrimidine synthase (435 aa).

Residues Asn-67, Met-96, Tyr-125, His-163, Ser-185–Gly-187, Asp-226–Arg-229, and Glu-265 each bind substrate. Residue His-269 participates in Zn(2+) binding. Tyr-292 contacts substrate. His-333 lines the Zn(2+) pocket. [4Fe-4S] cluster is bound by residues Cys-408, Cys-411, and Cys-415.

The protein belongs to the ThiC family. It depends on [4Fe-4S] cluster as a cofactor.

It carries out the reaction 5-amino-1-(5-phospho-beta-D-ribosyl)imidazole + S-adenosyl-L-methionine = 4-amino-2-methyl-5-(phosphooxymethyl)pyrimidine + CO + 5'-deoxyadenosine + formate + L-methionine + 3 H(+). The protein operates within cofactor biosynthesis; thiamine diphosphate biosynthesis. Its function is as follows. Catalyzes the synthesis of the hydroxymethylpyrimidine phosphate (HMP-P) moiety of thiamine from aminoimidazole ribotide (AIR) in a radical S-adenosyl-L-methionine (SAM)-dependent reaction. The chain is Phosphomethylpyrimidine synthase from Thermus thermophilus (strain ATCC BAA-163 / DSM 7039 / HB27).